The chain runs to 1158 residues: ATP-dependent helicase/deoxyribonuclease subunit B (1158 aa).

A UvrD-like helicase ATP-binding domain is found at 1-275; sequence MTLHAYLGRA…QYFNQLYRFN (275 aa). 8–15 contacts ATP; sequence GRAGTGKS. A UvrD-like helicase C-terminal domain is found at 269-583; that stretch reads NQLYRFNNQD…SIGTMDLAKV (315 aa). Residues Cys784, Cys1112, Cys1115, and Cys1121 each contribute to the [4Fe-4S] cluster site.

The protein belongs to the helicase family. AddB/RexB type 1 subfamily. Heterodimer of AddA and AddB. The cofactor is Mg(2+). Requires [4Fe-4S] cluster as cofactor.

The heterodimer acts as both an ATP-dependent DNA helicase and an ATP-dependent, dual-direction single-stranded exonuclease. Recognizes the chi site generating a DNA molecule suitable for the initiation of homologous recombination. The AddB subunit has 5' -&gt; 3' nuclease activity but not helicase activity. The chain is ATP-dependent helicase/deoxyribonuclease subunit B from Staphylococcus aureus (strain USA300).